A 93-amino-acid polypeptide reads, in one-letter code: Cell division protein CrgA (93 aa).

2 helical membrane-spanning segments follow: residues 31 to 51 (VWFV…LMVF) and 70 to 90 (LGPW…LLTM).

Belongs to the CrgA family.

It is found in the cell membrane. Functionally, involved in cell division. This Mycobacterium avium (strain 104) protein is Cell division protein CrgA.